We begin with the raw amino-acid sequence, 84 residues long: MTDKIRTLQGRVVSDKMEKSIVVAIERFVKHPIYGKFIKRTTKLHVHDENNECGIGDVVEIRECRPLSKTKSWTLVRVVEKAVL.

This sequence belongs to the universal ribosomal protein uS17 family. In terms of assembly, part of the 30S ribosomal subunit.

Its function is as follows. One of the primary rRNA binding proteins, it binds specifically to the 5'-end of 16S ribosomal RNA. The sequence is that of Small ribosomal subunit protein uS17 from Shigella boydii serotype 18 (strain CDC 3083-94 / BS512).